A 315-amino-acid chain; its full sequence is Transcription repressor OFP7 (315 aa).

The disordered stretch occupies residues 113–183 (YETPRRKIYN…ELPRVTRRPR (71 aa)). Residues 130 to 145 (RRRLKKKEKSNSRRRG) are compositionally biased toward basic residues. Polar residues predominate over residues 160-174 (LPSSTNLSPEYSSSE). In terms of domain architecture, OVATE spans 230 to 289 (VVKKSEDPYEDFKGSMMEMIVEKKMFEVAELEQLLSCFLSLNAKRHHRAIVRAFSEIWVA).

As to expression, expressed in roots, shoots, stems, flower buds and siliques.

It is found in the nucleus. Functionally, transcriptional repressor that regulates multiple aspects of plant growth and development through the regulation of BEL1-LIKE (BLH) and KNOX TALE (KNAT) homeodomain transcription factors. In Arabidopsis thaliana (Mouse-ear cress), this protein is Transcription repressor OFP7 (OFP7).